A 1357-amino-acid chain; its full sequence is Vascular endothelial growth factor receptor 3 (1357 aa).

The signal sequence occupies residues 1-24 (MKRDFTFFCRIWIGIPFFSGLVNG). 7 consecutive Ig-like C2-type domains span residues 25-121 (FSMS…YYRC), 138-244 (IFVF…VQVI), 255-343 (PEDS…RELT), 352-442 (PFIS…LNFT), 453-583 (EKEA…TTIP), 583-690 (PEGF…HRKY), and 699-785 (PRYR…ATVS). The Extracellular segment spans residues 25 to 796 (FSMSPPTLDN…IGSDDKTNVE (772 aa)). N-linked (GlcNAc...) asparagine glycosylation is found at Asn44, Asn48, Asn114, Asn216, and Asn271. Disulfide bonds link Cys51–Cys121 and Cys173–Cys225. Cysteines 272 and 331 form a disulfide. 3 N-linked (GlcNAc...) asparagine glycosylation sites follow: Asn360, Asn400, and Asn440. 3 disulfide bridges follow: Cys473-Cys562, Cys493-Cys514, and Cys606-Cys674. Asn553, Asn610, Asn660, Asn707, Asn711, and Asn751 each carry an N-linked (GlcNAc...) asparagine glycan. Cys720 and Cys772 are oxidised to a cystine. The chain crosses the membrane as a helical span at residues 797–817 (IVILIGTGVIAIFFWVLLLVI). Residues 818 to 1357 (FCNVKRVNPA…DYFSSSDQAV (540 aa)) lie on the Cytoplasmic side of the membrane. The 316-residue stretch at 866–1181 (LRLGKVLGHG…ALVEILGDLL (316 aa)) folds into the Protein kinase domain. ATP contacts are provided by residues 872 to 880 (LGHGAFGKV) and Lys900. The segment at 978 to 1007 (QSQVRRMIEAGQASQSEHQPSTSSTNPPRV) is disordered. The span at 989–1005 (QASQSEHQPSTSSTNPP) shows a compositional bias: polar residues. The Proton acceptor role is filled by Asp1045. A phosphotyrosine; by autocatalysis mark is found at Tyr1071 and Tyr1076. The disordered stretch occupies residues 1192 to 1212 (NVSQSSEDDGFSQASSRPPSQ). A phosphotyrosine; by autocatalysis mark is found at Tyr1226, Tyr1227, Tyr1334, and Tyr1338.

This sequence belongs to the protein kinase superfamily. Tyr protein kinase family. CSF-1/PDGF receptor subfamily. As to quaternary structure, interacts with vegfc and vegfd. Monomer in the absence of bound vegfc or vegfd. Homodimer in the presence of bound vegfc or vegfd. Autophosphorylated on tyrosine residues upon ligand binding. Autophosphorylation occurs in trans, i.e. one subunit of the dimeric receptor phosphorylates tyrosine residues on the other subunit.

It is found in the cell membrane. It localises to the cytoplasm. The protein localises to the nucleus. It carries out the reaction L-tyrosyl-[protein] + ATP = O-phospho-L-tyrosyl-[protein] + ADP + H(+). Its activity is regulated as follows. Present in an inactive conformation in the absence of bound ligand. Binding of vegfc or vegfd leads to dimerization and activation by autophosphorylation on tyrosine residues. Tyrosine-protein kinase that acts as a cell-surface receptor for vegf or vegfc. Combinations of multiple VEGF receptors are required for development of different blood vessel types in the embryo. Involved in angiogenesis, specifically in VEGF-induced sprouting of new blood vessels, but not required for proper vasculogenesis or hematopoiesis. The sequence is that of Vascular endothelial growth factor receptor 3 (flt4) from Danio rerio (Zebrafish).